We begin with the raw amino-acid sequence, 327 residues long: MRPLSLKGHERALTRVRFNREGDLTFSCAKDKKPCVWYTENGERIGSYDGHNGAVWDIDVSWDTSKCVTASGDLTVKIWDAELGSCIYTINHQTPMKSCGFSYSGNLVCYTTQKMTKNLSTVQVRDLRDGNQMAEGAESFFSTQFDVNATTALFSQMDDIITIGFESGLLQQYDLRNPDSPINTNEVVHRYSIQDLQLSPRGDFLISASRDKTAALLDVNDLKKLKQYKSERPVNSACIAPNRDHICLGGGEDAMQVTQTAVSAGHFEAKIYHMVFEEEFARFKGHFGPINTMAWHPSGSIIATGGEDGYVRIQEFDEDYLGFTYDF.

5 WD repeats span residues 8-49 (GHER…GSYD), 51-89 (HNGAVWDIDVSWDTSKCVTASGDLTVKIWDAELGSCIYT), 188-227 (VHRYSIQDLQLSPRGDFLISASRDKTAALLDVNDLKKLKQ), 229-268 (KSERPVNSACIAPNRDHICLGGGEDAMQVTQTAVSAGHFE), and 285-324 (GHFGPINTMAWHPSGSIIATGGEDGYVRIQEFDEDYLGFT).

The protein belongs to the eIF-3 subunit I family. As to quaternary structure, component of the eukaryotic translation initiation factor 3 (eIF-3) complex.

The protein resides in the cytoplasm. Component of the eukaryotic translation initiation factor 3 (eIF-3) complex, which is involved in protein synthesis of a specialized repertoire of mRNAs and, together with other initiation factors, stimulates binding of mRNA and methionyl-tRNAi to the 40S ribosome. The eIF-3 complex specifically targets and initiates translation of a subset of mRNAs involved in cell proliferation. This Caenorhabditis briggsae protein is Eukaryotic translation initiation factor 3 subunit I.